Here is a 185-residue protein sequence, read N- to C-terminus: Large ribosomal subunit protein uL22 (185 aa).

Belongs to the universal ribosomal protein uL22 family. In terms of assembly, component of the large ribosomal subunit. Mature ribosomes consist of a small (40S) and a large (60S) subunit. The 40S subunit contains about 32 different proteins and 1 molecule of RNA (18S). The 60S subunit contains 45 different proteins and 3 molecules of RNA (25S, 5.8S and 5S).

Its subcellular location is the cytoplasm. In terms of biological role, component of the ribosome, a large ribonucleoprotein complex responsible for the synthesis of proteins in the cell. The small ribosomal subunit (SSU) binds messenger RNAs (mRNAs) and translates the encoded message by selecting cognate aminoacyl-transfer RNA (tRNA) molecules. The large subunit (LSU) contains the ribosomal catalytic site termed the peptidyl transferase center (PTC), which catalyzes the formation of peptide bonds, thereby polymerizing the amino acids delivered by tRNAs into a polypeptide chain. The nascent polypeptides leave the ribosome through a tunnel in the LSU and interact with protein factors that function in enzymatic processing, targeting, and the membrane insertion of nascent chains at the exit of the ribosomal tunnel. The chain is Large ribosomal subunit protein uL22 from Candida albicans (strain SC5314 / ATCC MYA-2876) (Yeast).